Here is a 1044-residue protein sequence, read N- to C-terminus: Isoleucine--tRNA ligase (1044 aa).

Positions 48 to 58 match the 'HIGH' region motif; it reads PFATGLPHFGH. A 'KMSKS' region motif is present at residues 594 to 598; sequence KMSKS. Position 597 (Lys-597) interacts with ATP.

This sequence belongs to the class-I aminoacyl-tRNA synthetase family. IleS type 2 subfamily. Monomer. Zn(2+) is required as a cofactor.

The protein resides in the cytoplasm. The enzyme catalyses tRNA(Ile) + L-isoleucine + ATP = L-isoleucyl-tRNA(Ile) + AMP + diphosphate. In terms of biological role, catalyzes the attachment of isoleucine to tRNA(Ile). As IleRS can inadvertently accommodate and process structurally similar amino acids such as valine, to avoid such errors it has two additional distinct tRNA(Ile)-dependent editing activities. One activity is designated as 'pretransfer' editing and involves the hydrolysis of activated Val-AMP. The other activity is designated 'posttransfer' editing and involves deacylation of mischarged Val-tRNA(Ile). The polypeptide is Isoleucine--tRNA ligase (Borrelia duttonii (strain Ly)).